A 177-amino-acid chain; its full sequence is Small ribosomal subunit protein uS5 (177 aa).

The S5 DRBM domain maps to 19-82 (FIEKLVAIKR…DQAQKQMIKV (64 aa)).

This sequence belongs to the universal ribosomal protein uS5 family. Part of the 30S ribosomal subunit. Contacts proteins S4 and S8.

Its function is as follows. With S4 and S12 plays an important role in translational accuracy. Located at the back of the 30S subunit body where it stabilizes the conformation of the head with respect to the body. This is Small ribosomal subunit protein uS5 from Magnetococcus marinus (strain ATCC BAA-1437 / JCM 17883 / MC-1).